We begin with the raw amino-acid sequence, 2662 residues long: MESSVAVEGAGGPSTYFKGSSAALSRLVSTETTASDFCRSQLPTSRPPTDPPVSPTAEATDAFSRVSTSSRPLITGRVSTMRAASLSRSTALSASLRPRPPYDERSSSFHSECQAGEEGGPGASRRMHRSLAGSAESRAEREGSSFRLDTEKPFSRDGNIPSYAPSMSDSLKGGASGLSSPLLQRSRSDRRTGLRGESRTCDSEAASAESRFFSSSRYDPERTDRARDADLFERGSQLDSIPLSNRRPGTDPVSSEHLRESRRTVTAAVSDFLEDSRRGVYKDDQMWGFEQASFAEDKPGLAASASVRQEKLDPYLSRSSQGSSQGSGEPVSRNLRVSGEKQSSSTRAMASRHETSVLTSNSDRREERVAYLSCADEEDLASRRESEGNVQVSRESRHAVPSSQRLEPIERIHRKGGAALRESLGSRFDPKDITGRFLDSSSSEVPASARTQALGTDLHSRPRGLGSEMSSSRVAFYDSGREAGGLSSQRADGRRTGEESREGEDGRTGRKEDAVETRWGSSLGLSGESSGNTSLRRKQAEGVNETRSQATEPNGEASLFSPFGSGRMQSSEVPRRGEKQRHFSSLEISSARQEREPMAHTSVLASRPSFLPPSFSLGASETSTDRVLGGSTRPPCLEEGKPLRSELLAAELGEGGTERSTSLLHSAASPSSVSRRPRLLTAVDSPPREREDHVVPRETKTRLGDESGETRHALNRPAGLHGSTGFGVEASADLRGESGGRSSDGSRIRSSSSSAVSHLSQVSLPPLPRGRAGDEALSREEESGGRSGRQKRDREATLLHASSIFRSTVPLRPSVRSFSQPAASAGSDVVSPRSRHARDFDSLSRVAKTPQTEVGGESFRLYGKNPSSAPSALGAKETFLNSRGDDTEETNGDKDAKRGATVPAVNGGELGALPRVPAAGAEGLRGLSSRMSREVSSAYQPPQPPSAEECGASLQVSLDREQLGGNSGRSTRSNSLVSRIETGLSMPRSASGTTHASLLASNAGNAKSDTLGKGPTECVCQASRYMTRQKVHYEQQMKRVEEEREQQRQRRRILAEQEAQVALLQSQVQRQREGVVEEEKQLREMRAQLTAEREAMETRWQQLEKQHQELAEKKEKWRKTAQHKRDELQAFSHRIRADKKELDEKKKEVARDTTSLKDKVESVEKEQDRLNRERVELEEVRFALDREKAELDARISATEDERHRLKKKEEELIRRETKAQSKEDELRREQLEVEKRTQAVSLKAEEEEQKELDRVSLWRQKNEELDRRARLVHEQETDLDARTHALRMQETERKREDEREKKKLQQMQETFLEDKKSFAREKGRVEAQLDEEKKRLVEEKKTLEEARGKWEEERRREHAEFERKKKVWEEERSARVAELAAKEEAVREKEKLLEEEENRRREEMKKLTQELRDEKEQIARQLDADREDMRARLGAEREKLHEERLRGEEELQKERERLETQMEHLKEKERELEGAQNRWKEEQATVESRLREAEEKVLRDREVLAQEREAFEEEVRREREQFHEEQEAVLAEFRAQRQMAERELAEQKEQQEEMLEEERQRLLQAEERQQETYAEQMNQLRNLEEQLHQQKLHHQQDVSRHLEREEALFERERRLREEDQSVQDEKQKLSKEKQAVGQQWRQLEETQSQQKQEEASLKKEREALEDKTRDLRDQVQRVAEVDEKLARLREAEDALEIERAALEAEKESFRREKELIDAQVGAWRRKLSQREQEVGRRERAASTRLRDIETQEKVHRVRMEEDGNVVNRGVKQTASGALTIRRGPSLASGRAPSVSRQPLARERGGDTVTREEAAKEREEKKPGTNARTRCLSTERRREQKGNVSAGGPKVSAGRRTVTPAEDHGRGRSATKRGQDAGGREGEEGETKSANGDGGRNRKRPGAAVRESSSGDQHTTGGKNGKEFGKRNGVDRVSGLLPALRGQKSVAAVSSTRASSVACDGDEHETETERSIQGTTKSPTQALLSSPDRSDLPPQKSAPFSLSGSPQVSLATKGLTEHTRGASDRAEEGEEEAERKDRNRGRLLHSSRTTAEAKPSSQLHRTPFLDEEESVSSVSAGRTRAGESVPEATERGRRKEQREQGDSERKTESGSSRGVVDGSGSARVWENRERRSRLESEERQEDRRRETGEDEVVFQNIFEPGNSSTFARETFPRISHLAASRQSCSSSGLSHPLPASSASRQSPEKAGRASSSTYSPYTFRYSSFLKQQASSLTEEGDREGEEAKRRNPSNEPEMSGSPCLSFAEKSSASEGRPFSSRCPELLPTSASPERQAEDDGKQATRVSPSFSSQSSLCVSPVSLNGLSLGTLDRSRVTRSQETLEEGENEVSATRDVGARNGGQAEKRSTVSLNRQGPSAPSSSSFCSSYSLPQAASRISASVLRREERSMLSVERNGEDETERRRHEEHREVSVVGGGSSSLSSQTRVNEIVYRREGTGAHAKRGRGDSECVLSGKRDGFSGRETLSRTPLTSPSGVVGQERSVLSRAGCKEQEKEGRTSQASPHQLQSPRSRQAWKDRLAAACAPRTSVPLEEAEDDTEVGSPFLNSLRSQRNTRKEGESSFFSSSVYRRREEDERRSKGTLIRKNGEAGSAGSFNARESVISHLSAFNSAEDNSDCGSGENSSLSGLGSSTRISTGRGKSSLSGR.

Coiled coils occupy residues 1030–1248 (KVHY…EEEE) and 1281–1719 (ARTH…IDAQ).

The protein resides in the cytoplasm. It is found in the cytoskeleton. It localises to the microtubule organizing center. The protein localises to the centrosome. In terms of biological role, part of the centrosome inner core complex. Plays a role in the formation and/or stabilization of the mitotic spindle. Required for proper nuclear segregation and DNA partitioning during cell division. In Toxoplasma gondii (strain ATCC 50611 / Me49), this protein is Centrosome-associated protein CEP250L1.